The following is a 309-amino-acid chain: 4-hydroxy-3-methylbut-2-enyl diphosphate reductase (309 aa).

Cys12 contributes to the [4Fe-4S] cluster binding site. Residues His41 and His74 each contribute to the (2E)-4-hydroxy-3-methylbut-2-enyl diphosphate site. Residues His41 and His74 each coordinate dimethylallyl diphosphate. Isopentenyl diphosphate-binding residues include His41 and His74. [4Fe-4S] cluster is bound at residue Cys96. His124 serves as a coordination point for (2E)-4-hydroxy-3-methylbut-2-enyl diphosphate. His124 is a binding site for dimethylallyl diphosphate. Isopentenyl diphosphate is bound at residue His124. Glu126 serves as the catalytic Proton donor. A (2E)-4-hydroxy-3-methylbut-2-enyl diphosphate-binding site is contributed by Thr167. Position 197 (Cys197) interacts with [4Fe-4S] cluster. The (2E)-4-hydroxy-3-methylbut-2-enyl diphosphate site is built by Ser225, Ser226, Asn227, and Ser269. Dimethylallyl diphosphate is bound by residues Ser225, Ser226, Asn227, and Ser269. Isopentenyl diphosphate contacts are provided by Ser225, Ser226, Asn227, and Ser269.

The protein belongs to the IspH family. [4Fe-4S] cluster is required as a cofactor.

The catalysed reaction is isopentenyl diphosphate + 2 oxidized [2Fe-2S]-[ferredoxin] + H2O = (2E)-4-hydroxy-3-methylbut-2-enyl diphosphate + 2 reduced [2Fe-2S]-[ferredoxin] + 2 H(+). The enzyme catalyses dimethylallyl diphosphate + 2 oxidized [2Fe-2S]-[ferredoxin] + H2O = (2E)-4-hydroxy-3-methylbut-2-enyl diphosphate + 2 reduced [2Fe-2S]-[ferredoxin] + 2 H(+). It participates in isoprenoid biosynthesis; dimethylallyl diphosphate biosynthesis; dimethylallyl diphosphate from (2E)-4-hydroxy-3-methylbutenyl diphosphate: step 1/1. It functions in the pathway isoprenoid biosynthesis; isopentenyl diphosphate biosynthesis via DXP pathway; isopentenyl diphosphate from 1-deoxy-D-xylulose 5-phosphate: step 6/6. Functionally, catalyzes the conversion of 1-hydroxy-2-methyl-2-(E)-butenyl 4-diphosphate (HMBPP) into a mixture of isopentenyl diphosphate (IPP) and dimethylallyl diphosphate (DMAPP). Acts in the terminal step of the DOXP/MEP pathway for isoprenoid precursor biosynthesis. This chain is 4-hydroxy-3-methylbut-2-enyl diphosphate reductase, found in Shewanella halifaxensis (strain HAW-EB4).